A 259-amino-acid polypeptide reads, in one-letter code: MAVTNTPELIEADRLSYYAISKIEAQFIYKEIFTDHCYDIANLPSNPFIVDAGANIGLFSLYMKRKYPQAKILAFEPAPVCYDVLSRNLALNDALSGVKALQCGLSSSAGTLPLTYFPNLPGNSTLVPEEKNKLYEEAVRKRGKETADERFGGAVKVDVELKRLSDVLREYYPDGKPDQGLERIDLLKVDVEGAELEVLKGVDEEHWELVRNVVVETWEPSGIRPQIEALLEDKGFDITRDRAEWAPDQFSMITARRQD.

This sequence belongs to the FkbM methyltransferase family.

It participates in antibiotic biosynthesis. Functionally, methyltransferase; part of the gene cluster that mediates the biosynthesis of sordarin and hypoxysordarin, glycoside antibiotics with a unique tetracyclic diterpene aglycone structure. First, the geranylgeranyl diphosphate synthase sdnC constructs GGDP from farnesyl diphosphate and isopentenyl diphosphate. The diterpene cyclase sdnA then catalyzes the cyclization of GGDP to afford cycloaraneosene. Cycloaraneosene is then hydroxylated four times by the putative cytochrome P450 monooxygenases sdnB, sdnE, sdnF and sdnH to give a hydroxylated cycloaraneosene derivative such as cycloaraneosene-8,9,13,19-tetraol. Although the order of the hydroxylations is unclear, at least C8, C9 and C13 of the cycloaraneosene skeleton are hydroxylated before the sordaricin formation. Dehydration of the 13-hydroxy group of the hydroxylated cycloaraneosene derivative might be catalyzed by an unassigned hypothetical protein such as sdnG and sdnP to construct the cyclopentadiene moiety. The FAD-dependent oxidoreductase sdnN is proposed to catalyze the oxidation at C9 of the hydroxylated cycloaraneosene derivative and also catalyze the Baeyer-Villiger oxidation to give the lactone intermediate. The presumed lactone intermediate would be hydrolyzed to give an acrolein moiety and a carboxylate moiety. Then, [4+2]cycloaddition would occur between the acrolein moiety and the cyclopentadiene moiety to give sordaricin. SdnN might also be involved in the [4+2]cycloaddition after the hypothesized oxidation to accommodate the oxidized product and prompt the [4+2]cycloaddition. GDP-6-deoxy-D-altrose may be biosynthesized from GDP-D-mannose by the putative GDP-mannose-4,6-dehydratase sdnI and the short-chain dehydrogenase sdnK. The glycosyltransferase sdnJ catalyzes the attachment of 6-deoxy-D-altrose onto the 19-hydroxy group of sordaricin to give 4'-O-demethylsordarin. The methyltransferase sdnD would complete the biosynthesis of sordarin. Sordarin can be further modified into hypoxysordarin. The unique acyl chain at the 3'-hydroxy group of hypoxysordarin would be constructed by an iterative type I PKS sdnO and the trans-acting polyketide methyltransferase sdnL. SdnL would be responsible for the introduction of an alpha-methyl group of the polyketide chain. Alternatively, the beta-lactamase-like protein sdnR might be responsible for the cleavage and transfer of the polyketide chain from the PKS sdnO to sordarin. Two putative cytochrome P450 monooxygenases, sdnQ and sdnT, might catalyze the epoxidations of the polyketide chain to complete the biosynthesis of hypoxysordarin. Transcriptional regulators sdnM and sdnS are presumably encoded for the transcriptional regulation of the expression of the sdn gene cluster. This chain is Methyltransferase sdnD, found in Sordaria araneosa (Pleurage araneosa).